The sequence spans 618 residues: Probable Xaa-Pro aminopeptidase P (618 aa).

The Mn(2+) site is built by Asp415, Asp426, Glu524, and Glu538.

It belongs to the peptidase M24B family. The cofactor is Mn(2+).

The catalysed reaction is Release of any N-terminal amino acid, including proline, that is linked to proline, even from a dipeptide or tripeptide.. Functionally, catalyzes the removal of a penultimate prolyl residue from the N-termini of peptides. This chain is Probable Xaa-Pro aminopeptidase P (AMPP), found in Pyricularia oryzae (strain 70-15 / ATCC MYA-4617 / FGSC 8958) (Rice blast fungus).